We begin with the raw amino-acid sequence, 577 residues long: Arginine--tRNA ligase (577 aa).

A 'HIGH' region motif is present at residues 122-132 (PNVAKEMHVGH).

Belongs to the class-I aminoacyl-tRNA synthetase family. In terms of assembly, monomer.

It is found in the cytoplasm. The enzyme catalyses tRNA(Arg) + L-arginine + ATP = L-arginyl-tRNA(Arg) + AMP + diphosphate. The sequence is that of Arginine--tRNA ligase from Escherichia coli (strain ATCC 8739 / DSM 1576 / NBRC 3972 / NCIMB 8545 / WDCM 00012 / Crooks).